The primary structure comprises 340 residues: Glycerol-3-phosphate dehydrogenase [NAD(P)+] (340 aa).

NADPH contacts are provided by Ser11, Trp12, Arg33, and Lys106. 3 residues coordinate sn-glycerol 3-phosphate: Lys106, Gly137, and Ser139. Ala141 provides a ligand contact to NADPH. Sn-glycerol 3-phosphate contacts are provided by Lys192, Asp245, Ser255, Arg256, and Asn257. The active-site Proton acceptor is the Lys192. Residue Arg256 coordinates NADPH. Residues Val280 and Glu282 each coordinate NADPH.

Belongs to the NAD-dependent glycerol-3-phosphate dehydrogenase family.

It is found in the cytoplasm. The enzyme catalyses sn-glycerol 3-phosphate + NAD(+) = dihydroxyacetone phosphate + NADH + H(+). It catalyses the reaction sn-glycerol 3-phosphate + NADP(+) = dihydroxyacetone phosphate + NADPH + H(+). It functions in the pathway membrane lipid metabolism; glycerophospholipid metabolism. Functionally, catalyzes the reduction of the glycolytic intermediate dihydroxyacetone phosphate (DHAP) to sn-glycerol 3-phosphate (G3P), the key precursor for phospholipid synthesis. This chain is Glycerol-3-phosphate dehydrogenase [NAD(P)+], found in Bacillus cereus (strain ATCC 10987 / NRS 248).